Here is a 390-residue protein sequence, read N- to C-terminus: Homoserine O-acetyltransferase (390 aa).

Residues 55–366 (NAILINHAFS…ESDCGHDAFL (312 aa)) form the AB hydrolase-1 domain. Ser163 (nucleophile) is an active-site residue. Arg232 provides a ligand contact to substrate. Residues Asp329 and His362 contribute to the active site. Asp363 contacts substrate.

The protein belongs to the AB hydrolase superfamily. MetX family. Homodimer.

It is found in the cytoplasm. The catalysed reaction is L-homoserine + acetyl-CoA = O-acetyl-L-homoserine + CoA. The protein operates within amino-acid biosynthesis; L-methionine biosynthesis via de novo pathway; O-acetyl-L-homoserine from L-homoserine: step 1/1. Functionally, transfers an acetyl group from acetyl-CoA to L-homoserine, forming acetyl-L-homoserine. This Desulfotalea psychrophila (strain LSv54 / DSM 12343) protein is Homoserine O-acetyltransferase.